Here is a 166-residue protein sequence, read N- to C-terminus: NADPH-dependent 7-cyano-7-deazaguanine reductase (166 aa).

The active-site Thioimide intermediate is Cys-57. Asp-64 acts as the Proton donor in catalysis. Residues 79-81 and 98-99 contribute to the substrate site; these read VES and HE.

The protein belongs to the GTP cyclohydrolase I family. QueF type 1 subfamily.

Its subcellular location is the cytoplasm. It carries out the reaction 7-aminomethyl-7-carbaguanine + 2 NADP(+) = 7-cyano-7-deazaguanine + 2 NADPH + 3 H(+). Its pathway is tRNA modification; tRNA-queuosine biosynthesis. In terms of biological role, catalyzes the NADPH-dependent reduction of 7-cyano-7-deazaguanine (preQ0) to 7-aminomethyl-7-deazaguanine (preQ1). This is NADPH-dependent 7-cyano-7-deazaguanine reductase from Staphylococcus haemolyticus (strain JCSC1435).